Here is a 230-residue protein sequence, read N- to C-terminus: Cytidylate kinase (230 aa).

Residue G12–T20 coordinates ATP.

It belongs to the cytidylate kinase family. Type 1 subfamily.

It localises to the cytoplasm. The enzyme catalyses CMP + ATP = CDP + ADP. The catalysed reaction is dCMP + ATP = dCDP + ADP. The chain is Cytidylate kinase from Corynebacterium diphtheriae (strain ATCC 700971 / NCTC 13129 / Biotype gravis).